Here is a 142-residue protein sequence, read N- to C-terminus: Salivary protein 15a (142 aa).

A signal peptide spans 1–20 (MKYLGLALISAVFLIGACQA). 3 cysteine pairs are disulfide-bonded: cysteine 27-cysteine 44, cysteine 40-cysteine 108, and cysteine 91-cysteine 117.

The protein belongs to the PBP/GOBP family. Female salivary gland (at protein level).

The protein resides in the secreted. Functionally, inhibits contact coagulation pathway activation in the host by sequestering anionic polymers, such as polyphosphate and dextran sulfate, and thus blocking interaction of protein components of the pathway with negatively charged surfaces. Inhibits dextran sulfate-mediated autoactivation of host coagulation factor XII (F12). Inhibits dextran sulfate-mediated autoactivation of host factor XI (F11). Inhibits polyphosphate-mediated activation of host F11 by thrombin (F2). May inhibit dextran sulfate-mediated bradykinin generation in host plasma. The chain is Salivary protein 15a from Phlebotomus duboscqi (Sandfly).